The following is a 116-amino-acid chain: Large ribosomal subunit protein bL20 (116 aa).

It belongs to the bacterial ribosomal protein bL20 family.

Binds directly to 23S ribosomal RNA and is necessary for the in vitro assembly process of the 50S ribosomal subunit. It is not involved in the protein synthesizing functions of that subunit. This Bacteroides thetaiotaomicron (strain ATCC 29148 / DSM 2079 / JCM 5827 / CCUG 10774 / NCTC 10582 / VPI-5482 / E50) protein is Large ribosomal subunit protein bL20.